A 1361-amino-acid polypeptide reads, in one-letter code: uncharacterized protein (1361 aa).

The protein belongs to the IIV-6 261R/396L/443R family.

This is an uncharacterized protein from Invertebrate iridescent virus 6 (IIV-6).